The primary structure comprises 294 residues: Cell division control protein 2 homolog A (294 aa).

Residues 4–287 (YEKVEKIGEG…ARNALQHEYF (284 aa)) form the Protein kinase domain. ATP is bound by residues 10–18 (IGEGTYGVV) and Lys33. Thr14 is subject to Phosphothreonine. Tyr15 is subject to Phosphotyrosine. Asp127 (proton acceptor) is an active-site residue. Thr161 carries the phosphothreonine; by CAK modification.

The protein belongs to the protein kinase superfamily. CMGC Ser/Thr protein kinase family. CDC2/CDKX subfamily.

It catalyses the reaction L-seryl-[protein] + ATP = O-phospho-L-seryl-[protein] + ADP + H(+). The catalysed reaction is L-threonyl-[protein] + ATP = O-phospho-L-threonyl-[protein] + ADP + H(+). It carries out the reaction [DNA-directed RNA polymerase] + ATP = phospho-[DNA-directed RNA polymerase] + ADP + H(+). With respect to regulation, phosphorylation at Thr-14 or Tyr-15 inactivates the enzyme, while phosphorylation at Thr-161 activates it. Its function is as follows. Plays a key role in the control of the eukaryotic cell cycle. This is Cell division control protein 2 homolog A (CDC2A) from Antirrhinum majus (Garden snapdragon).